A 609-amino-acid polypeptide reads, in one-letter code: UvrABC system protein C (609 aa).

Positions 13–91 (HEPGVYRMYD…IKLYQPRYNV (79 aa)) constitute a GIY-YIG domain. One can recognise a UVR domain in the interval 201-236 (QQVLDYLIGKMEQASRNLDFEQAARYRDQIQAVRSV).

The protein belongs to the UvrC family. Interacts with UvrB in an incision complex.

Its subcellular location is the cytoplasm. Functionally, the UvrABC repair system catalyzes the recognition and processing of DNA lesions. UvrC both incises the 5' and 3' sides of the lesion. The N-terminal half is responsible for the 3' incision and the C-terminal half is responsible for the 5' incision. This is UvrABC system protein C from Haemophilus influenzae (strain ATCC 51907 / DSM 11121 / KW20 / Rd).